We begin with the raw amino-acid sequence, 399 residues long: Tryptophan synthase beta chain (399 aa).

An N6-(pyridoxal phosphate)lysine modification is found at Lys-92.

Belongs to the TrpB family. As to quaternary structure, tetramer of two alpha and two beta chains. Pyridoxal 5'-phosphate is required as a cofactor.

The catalysed reaction is (1S,2R)-1-C-(indol-3-yl)glycerol 3-phosphate + L-serine = D-glyceraldehyde 3-phosphate + L-tryptophan + H2O. It functions in the pathway amino-acid biosynthesis; L-tryptophan biosynthesis; L-tryptophan from chorismate: step 5/5. The beta subunit is responsible for the synthesis of L-tryptophan from indole and L-serine. This Nitrosomonas eutropha (strain DSM 101675 / C91 / Nm57) protein is Tryptophan synthase beta chain.